Reading from the N-terminus, the 400-residue chain is Probable tRNA sulfurtransferase (400 aa).

A THUMP domain is found at E60–T164. Residues L182–L183, H207–F208, R264, G286, and Q295 each bind ATP.

It belongs to the ThiI family.

It is found in the cytoplasm. It catalyses the reaction [ThiI sulfur-carrier protein]-S-sulfanyl-L-cysteine + a uridine in tRNA + 2 reduced [2Fe-2S]-[ferredoxin] + ATP + H(+) = [ThiI sulfur-carrier protein]-L-cysteine + a 4-thiouridine in tRNA + 2 oxidized [2Fe-2S]-[ferredoxin] + AMP + diphosphate. It carries out the reaction [ThiS sulfur-carrier protein]-C-terminal Gly-Gly-AMP + S-sulfanyl-L-cysteinyl-[cysteine desulfurase] + AH2 = [ThiS sulfur-carrier protein]-C-terminal-Gly-aminoethanethioate + L-cysteinyl-[cysteine desulfurase] + A + AMP + 2 H(+). The protein operates within cofactor biosynthesis; thiamine diphosphate biosynthesis. Functionally, catalyzes the ATP-dependent transfer of a sulfur to tRNA to produce 4-thiouridine in position 8 of tRNAs, which functions as a near-UV photosensor. Also catalyzes the transfer of sulfur to the sulfur carrier protein ThiS, forming ThiS-thiocarboxylate. This is a step in the synthesis of thiazole, in the thiamine biosynthesis pathway. The sulfur is donated as persulfide by IscS. In Oceanobacillus iheyensis (strain DSM 14371 / CIP 107618 / JCM 11309 / KCTC 3954 / HTE831), this protein is Probable tRNA sulfurtransferase.